The chain runs to 121 residues: Ig heavy chain V region MPC 11 (121 aa).

The Ig-like domain occupies 1 to 112; sequence EAQLQQSGAE…NSSPYFDSWG (112 aa).

The chain is Ig heavy chain V region MPC 11 from Mus musculus (Mouse).